The following is a 206-amino-acid chain: dITP/XTP pyrophosphatase (206 aa).

7 to 12 serves as a coordination point for substrate; the sequence is TSNKDK. Residue aspartate 74 is the Proton acceptor of the active site. Residue aspartate 74 participates in Mg(2+) binding. Substrate contacts are provided by residues serine 75, 159–162, lysine 182, and 187–188; these read FGYD and HR.

Belongs to the HAM1 NTPase family. As to quaternary structure, homodimer. It depends on Mg(2+) as a cofactor.

It carries out the reaction XTP + H2O = XMP + diphosphate + H(+). It catalyses the reaction dITP + H2O = dIMP + diphosphate + H(+). The catalysed reaction is ITP + H2O = IMP + diphosphate + H(+). Its function is as follows. Pyrophosphatase that catalyzes the hydrolysis of nucleoside triphosphates to their monophosphate derivatives, with a high preference for the non-canonical purine nucleotides XTP (xanthosine triphosphate), dITP (deoxyinosine triphosphate) and ITP. Seems to function as a house-cleaning enzyme that removes non-canonical purine nucleotides from the nucleotide pool, thus preventing their incorporation into DNA/RNA and avoiding chromosomal lesions. The polypeptide is dITP/XTP pyrophosphatase (Campylobacter hominis (strain ATCC BAA-381 / DSM 21671 / CCUG 45161 / LMG 19568 / NCTC 13146 / CH001A)).